Reading from the N-terminus, the 389-residue chain is NADH-quinone oxidoreductase subunit D (389 aa).

This sequence belongs to the complex I 49 kDa subunit family. In terms of assembly, NDH-1 is composed of 14 different subunits. Subunits NuoB, C, D, E, F, and G constitute the peripheral sector of the complex.

It localises to the cell inner membrane. It carries out the reaction a quinone + NADH + 5 H(+)(in) = a quinol + NAD(+) + 4 H(+)(out). Its function is as follows. NDH-1 shuttles electrons from NADH, via FMN and iron-sulfur (Fe-S) centers, to quinones in the respiratory chain. The immediate electron acceptor for the enzyme in this species is believed to be ubiquinone. Couples the redox reaction to proton translocation (for every two electrons transferred, four hydrogen ions are translocated across the cytoplasmic membrane), and thus conserves the redox energy in a proton gradient. The sequence is that of NADH-quinone oxidoreductase subunit D from Rickettsia typhi (strain ATCC VR-144 / Wilmington).